The primary structure comprises 402 residues: Argininosuccinate synthase (402 aa).

ATP-binding positions include 9–17 and Ala-36; that span reads AYSGGLDTS. The L-citrulline site is built by Tyr-87 and Ser-92. Gly-117 contacts ATP. L-aspartate-binding residues include Thr-119, Asn-123, and Asp-124. Asn-123 provides a ligand contact to L-citrulline. 5 residues coordinate L-citrulline: Arg-127, Ser-176, Ser-185, Glu-261, and Tyr-273.

Belongs to the argininosuccinate synthase family. Type 1 subfamily. As to quaternary structure, homotetramer.

The protein localises to the cytoplasm. The enzyme catalyses L-citrulline + L-aspartate + ATP = 2-(N(omega)-L-arginino)succinate + AMP + diphosphate + H(+). Its pathway is amino-acid biosynthesis; L-arginine biosynthesis; L-arginine from L-ornithine and carbamoyl phosphate: step 2/3. The protein is Argininosuccinate synthase of Deinococcus radiodurans (strain ATCC 13939 / DSM 20539 / JCM 16871 / CCUG 27074 / LMG 4051 / NBRC 15346 / NCIMB 9279 / VKM B-1422 / R1).